A 156-amino-acid polypeptide reads, in one-letter code: Crossover junction endodeoxyribonuclease RuvC (156 aa).

Active-site residues include aspartate 7, glutamate 67, and aspartate 139. Residues aspartate 7, glutamate 67, and aspartate 139 each contribute to the Mg(2+) site.

This sequence belongs to the RuvC family. As to quaternary structure, homodimer which binds Holliday junction (HJ) DNA. The HJ becomes 2-fold symmetrical on binding to RuvC with unstacked arms; it has a different conformation from HJ DNA in complex with RuvA. In the full resolvosome a probable DNA-RuvA(4)-RuvB(12)-RuvC(2) complex forms which resolves the HJ. Mg(2+) is required as a cofactor.

The protein resides in the cytoplasm. The catalysed reaction is Endonucleolytic cleavage at a junction such as a reciprocal single-stranded crossover between two homologous DNA duplexes (Holliday junction).. Functionally, the RuvA-RuvB-RuvC complex processes Holliday junction (HJ) DNA during genetic recombination and DNA repair. Endonuclease that resolves HJ intermediates. Cleaves cruciform DNA by making single-stranded nicks across the HJ at symmetrical positions within the homologous arms, yielding a 5'-phosphate and a 3'-hydroxyl group; requires a central core of homology in the junction. The consensus cleavage sequence is 5'-(A/T)TT(C/G)-3'. Cleavage occurs on the 3'-side of the TT dinucleotide at the point of strand exchange. HJ branch migration catalyzed by RuvA-RuvB allows RuvC to scan DNA until it finds its consensus sequence, where it cleaves and resolves the cruciform DNA. The polypeptide is Crossover junction endodeoxyribonuclease RuvC (Sphingopyxis alaskensis (strain DSM 13593 / LMG 18877 / RB2256) (Sphingomonas alaskensis)).